Here is a 403-residue protein sequence, read N- to C-terminus: PP2A regulatory subunit TAP46 (403 aa).

Disordered regions lie at residues 158–184 and 351–403; these read ERRG…LDDD and ANSS…TPCG. Composition is skewed to acidic residues over residues 174-184 and 366-375; these read ETEEDDVLDDD and EDDEEDDDDA. Basic and acidic residues predominate over residues 376–391; the sequence is AQDKARAWDDWKDDNP.

Belongs to the IGBP1/TAP42 family.

Involved in the regulation of the TOR signaling pathway. Seems to act as a regulator of PP2A catalytic activity. The chain is PP2A regulatory subunit TAP46 from Nicotiana tabacum (Common tobacco).